Consider the following 249-residue polypeptide: Zinc import ATP-binding protein ZnuC (249 aa).

Residues 1–219 (MRLVSLRNAT…PEYQALFGSG (219 aa)) enclose the ABC transporter domain. ATP is bound at residue 36–43 (GPNGSGKS).

It belongs to the ABC transporter superfamily. Zinc importer (TC 3.A.1.15.5) family. As to quaternary structure, the complex is composed of two ATP-binding proteins (ZnuC), two transmembrane proteins (ZnuB) and a solute-binding protein (ZnuA).

Its subcellular location is the cell inner membrane. It catalyses the reaction Zn(2+)(out) + ATP(in) + H2O(in) = Zn(2+)(in) + ADP(in) + phosphate(in) + H(+)(in). Part of the ABC transporter complex ZnuABC involved in zinc import. Responsible for energy coupling to the transport system. The protein is Zinc import ATP-binding protein ZnuC of Ruegeria sp. (strain TM1040) (Silicibacter sp.).